A 267-amino-acid polypeptide reads, in one-letter code: 4-hydroxy-tetrahydrodipicolinate reductase (267 aa).

NAD(+) contacts are provided by residues 8–13 (GAAGRM) and Glu34. Residue Arg35 participates in NADP(+) binding. NAD(+)-binding positions include 98 to 100 (GST) and 122 to 125 (APNM). Residue His155 is the Proton donor/acceptor of the active site. Residue His156 participates in (S)-2,3,4,5-tetrahydrodipicolinate binding. Lys159 acts as the Proton donor in catalysis. 165–166 (GT) lines the (S)-2,3,4,5-tetrahydrodipicolinate pocket.

This sequence belongs to the DapB family.

It localises to the cytoplasm. It catalyses the reaction (S)-2,3,4,5-tetrahydrodipicolinate + NAD(+) + H2O = (2S,4S)-4-hydroxy-2,3,4,5-tetrahydrodipicolinate + NADH + H(+). The catalysed reaction is (S)-2,3,4,5-tetrahydrodipicolinate + NADP(+) + H2O = (2S,4S)-4-hydroxy-2,3,4,5-tetrahydrodipicolinate + NADPH + H(+). The protein operates within amino-acid biosynthesis; L-lysine biosynthesis via DAP pathway; (S)-tetrahydrodipicolinate from L-aspartate: step 4/4. Catalyzes the conversion of 4-hydroxy-tetrahydrodipicolinate (HTPA) to tetrahydrodipicolinate. The protein is 4-hydroxy-tetrahydrodipicolinate reductase of Geobacter sp. (strain M21).